Reading from the N-terminus, the 223-residue chain is Ribose-5-phosphate isomerase A (223 aa).

Substrate is bound by residues 28-31 (TGST), 81-84 (DGTD), and 94-97 (KGGG). The active-site Proton acceptor is glutamate 103. Lysine 121 lines the substrate pocket.

Belongs to the ribose 5-phosphate isomerase family. Homodimer.

The enzyme catalyses aldehydo-D-ribose 5-phosphate = D-ribulose 5-phosphate. It participates in carbohydrate degradation; pentose phosphate pathway; D-ribose 5-phosphate from D-ribulose 5-phosphate (non-oxidative stage): step 1/1. In terms of biological role, catalyzes the reversible conversion of ribose-5-phosphate to ribulose 5-phosphate. The sequence is that of Ribose-5-phosphate isomerase A from Baumannia cicadellinicola subsp. Homalodisca coagulata.